The chain runs to 29 residues: ATP synthase subunit 9, mitochondrial (29 aa).

This sequence belongs to the ATPase C chain family. In terms of assembly, F-type ATPases have 2 components, CF(1) - the catalytic core - and CF(0) - the membrane proton channel. CF(1) has five subunits: alpha(3), beta(3), gamma(1), delta(1), epsilon(1). CF(0) has three main subunits: a, b and c.

The protein localises to the mitochondrion membrane. Its function is as follows. Mitochondrial membrane ATP synthase (F(1)F(0) ATP synthase or Complex V) produces ATP from ADP in the presence of a proton gradient across the membrane which is generated by electron transport complexes of the respiratory chain. F-type ATPases consist of two structural domains, F(1) - containing the extramembraneous catalytic core and F(0) - containing the membrane proton channel, linked together by a central stalk and a peripheral stalk. During catalysis, ATP synthesis in the catalytic domain of F(1) is coupled via a rotary mechanism of the central stalk subunits to proton translocation. Part of the complex F(0) domain. A homomeric c-ring of probably 10 subunits is part of the complex rotary element. This Wickerhamomyces pijperi (Yeast) protein is ATP synthase subunit 9, mitochondrial (ATP9).